We begin with the raw amino-acid sequence, 33 residues long: Pardaxin P-2 (33 aa).

Belongs to the pardaxin family. As to quaternary structure, in aqueous solution exists as a tetramer.

The protein localises to the secreted. Its subcellular location is the target cell membrane. Functionally, exhibits unusual shark repellent and surfactant properties. Forms voltage-dependent, ion-permeable channels in membranes. At high concentration causes cell membrane lysis. This Pardachirus pavoninus (Peacock sole) protein is Pardaxin P-2.